Here is a 344-residue protein sequence, read N- to C-terminus: Arginine N-succinyltransferase (344 aa).

Leu-125 is a succinyl-CoA binding site. His-229 acts as the Proton donor in catalysis.

Belongs to the arginine N-succinyltransferase family.

It carries out the reaction succinyl-CoA + L-arginine = N(2)-succinyl-L-arginine + CoA + H(+). Its pathway is amino-acid degradation; L-arginine degradation via AST pathway; L-glutamate and succinate from L-arginine: step 1/5. In terms of biological role, catalyzes the transfer of succinyl-CoA to arginine to produce N(2)-succinylarginine. The sequence is that of Arginine N-succinyltransferase from Escherichia coli (strain UTI89 / UPEC).